We begin with the raw amino-acid sequence, 471 residues long: 3-isopropylmalate dehydratase large subunit (471 aa).

Residues C346, C406, and C409 each coordinate [4Fe-4S] cluster.

The protein belongs to the aconitase/IPM isomerase family. LeuC type 1 subfamily. Heterodimer of LeuC and LeuD. Requires [4Fe-4S] cluster as cofactor.

The enzyme catalyses (2R,3S)-3-isopropylmalate = (2S)-2-isopropylmalate. It functions in the pathway amino-acid biosynthesis; L-leucine biosynthesis; L-leucine from 3-methyl-2-oxobutanoate: step 2/4. In terms of biological role, catalyzes the isomerization between 2-isopropylmalate and 3-isopropylmalate, via the formation of 2-isopropylmaleate. The chain is 3-isopropylmalate dehydratase large subunit from Bacillus pumilus (strain SAFR-032).